Reading from the N-terminus, the 523-residue chain is MSPAGCSHVNSFKVENWRQNLRVIYQCFVWSGTPETRKRKAKSCVCHMCGAHLNRLHSCLYCVYFGCFTKKHIHEHAKNKRHNLAIDLLYGGIYCFMCQDYIYDKDMEQVAKEEQRKAWKLQVFSPALVSPYQYTMTGVGEKYSTWEPTKRELELLQHNPKRRKITTNCTIGLRGLINLGNTCFMNCIVQALTHTPLLRDFFLSDRHKCEMQSPNSCLVCEMSTLFQEFYSGHRSPHIPYRLLHLVWTHARHLAGYEQQDAHEFLIAALDVLHRHCKGDDNGKKANNPNHCNCIIDQIFTGGLQSDVTCQVCHGVSTTIDPFWDISLDLPGSSTPFWPLSPGSDAGVVNGESHVSGTTTLTDCLRRFTRPEHLGSSAKIKCSGCHSYQESTKQLTMKKLPIVACFHLKRFEHSAKLRRKITTYVSFPLELDMMPFMASSKESRMNGQYQQPSDSLHNDNKYSLFAVVNHQGTLESGHYTSFIRQHKDQWFKCDDAIITKASIKDVIDSEGYLLFYHKQFLEYE.

The segment at 4–121 adopts a UBP-type zinc-finger fold; the sequence is AGCSHVNSFK…KEEQRKAWKL (118 aa). Positions 6, 8, 46, 49, 59, 62, 67, 72, 76, 82, 95, and 98 each coordinate Zn(2+). Positions 174 to 518 constitute a USP domain; the sequence is RGLINLGNTC…EGYLLFYHKQ (345 aa). Cys-183 (nucleophile) is an active-site residue. His-477 functions as the Proton acceptor in the catalytic mechanism.

It belongs to the peptidase C19 family. UBP8 subfamily. Component of some SAGA transcription coactivator-HAT complexes.

The protein resides in the nucleus. The enzyme catalyses Thiol-dependent hydrolysis of ester, thioester, amide, peptide and isopeptide bonds formed by the C-terminal Gly of ubiquitin (a 76-residue protein attached to proteins as an intracellular targeting signal).. Functionally, histone deubiquitinating component of the transcription regulatory histone acetylation (HAT) complex SAGA. Catalyzes the deubiquitination of both histones H2A and H2B, thereby acting as a coactivator. Recruited to specific gene promoters by activators, where it is required for transcription. This Xenopus laevis (African clawed frog) protein is Ubiquitin carboxyl-terminal hydrolase 22-B (usp22-b).